The primary structure comprises 92 residues: Putative pterin-4-alpha-carbinolamine dehydratase (92 aa).

This sequence belongs to the pterin-4-alpha-carbinolamine dehydratase family.

It carries out the reaction (4aS,6R)-4a-hydroxy-L-erythro-5,6,7,8-tetrahydrobiopterin = (6R)-L-erythro-6,7-dihydrobiopterin + H2O. This is Putative pterin-4-alpha-carbinolamine dehydratase from Natronomonas pharaonis (strain ATCC 35678 / DSM 2160 / CIP 103997 / JCM 8858 / NBRC 14720 / NCIMB 2260 / Gabara) (Halobacterium pharaonis).